Reading from the N-terminus, the 174-residue chain is uncharacterized protein (174 aa).

This is an uncharacterized protein from Methanocaldococcus jannaschii (strain ATCC 43067 / DSM 2661 / JAL-1 / JCM 10045 / NBRC 100440) (Methanococcus jannaschii).